The chain runs to 131 residues: Large ribosomal subunit protein eL14 (131 aa).

Belongs to the eukaryotic ribosomal protein eL14 family. As to quaternary structure, component of the large ribosomal subunit. Mature ribosomes consist of a small (40S) and a large (60S) subunit. The 40S subunit contains about 32 different proteins and 1 molecule of RNA (18S). The 60S subunit contains 45 different proteins and 3 molecules of RNA (25S, 5.8S and 5S).

It is found in the cytoplasm. Component of the ribosome, a large ribonucleoprotein complex responsible for the synthesis of proteins in the cell. The small ribosomal subunit (SSU) binds messenger RNAs (mRNAs) and translates the encoded message by selecting cognate aminoacyl-transfer RNA (tRNA) molecules. The large subunit (LSU) contains the ribosomal catalytic site termed the peptidyl transferase center (PTC), which catalyzes the formation of peptide bonds, thereby polymerizing the amino acids delivered by tRNAs into a polypeptide chain. The nascent polypeptides leave the ribosome through a tunnel in the LSU and interact with protein factors that function in enzymatic processing, targeting, and the membrane insertion of nascent chains at the exit of the ribosomal tunnel. The chain is Large ribosomal subunit protein eL14 from Candida albicans (strain SC5314 / ATCC MYA-2876) (Yeast).